Consider the following 473-residue polypeptide: Ribulose bisphosphate carboxylase large chain (473 aa).

Substrate is bound by residues N116 and T166. The active-site Proton acceptor is the K168. K170 contributes to the substrate binding site. Mg(2+) contacts are provided by K194, D196, and E197. Position 194 is an N6-carboxylysine (K194). The active-site Proton acceptor is H287. Substrate contacts are provided by R288, H320, and S372.

Belongs to the RuBisCO large chain family. Type I subfamily. Heterohexadecamer of 8 large chains and 8 small chains. Requires Mg(2+) as cofactor.

It catalyses the reaction 2 (2R)-3-phosphoglycerate + 2 H(+) = D-ribulose 1,5-bisphosphate + CO2 + H2O. The catalysed reaction is D-ribulose 1,5-bisphosphate + O2 = 2-phosphoglycolate + (2R)-3-phosphoglycerate + 2 H(+). In terms of biological role, ruBisCO catalyzes two reactions: the carboxylation of D-ribulose 1,5-bisphosphate, the primary event in carbon dioxide fixation, as well as the oxidative fragmentation of the pentose substrate. Both reactions occur simultaneously and in competition at the same active site. This Nitrobacter winogradskyi (Nitrobacter agilis) protein is Ribulose bisphosphate carboxylase large chain.